A 513-amino-acid polypeptide reads, in one-letter code: ATP synthase subunit alpha (513 aa).

169–176 contributes to the ATP binding site; that stretch reads GDRQTGKT.

Belongs to the ATPase alpha/beta chains family. As to quaternary structure, F-type ATPases have 2 components, CF(1) - the catalytic core - and CF(0) - the membrane proton channel. CF(1) has five subunits: alpha(3), beta(3), gamma(1), delta(1), epsilon(1). CF(0) has three main subunits: a(1), b(2) and c(9-12). The alpha and beta chains form an alternating ring which encloses part of the gamma chain. CF(1) is attached to CF(0) by a central stalk formed by the gamma and epsilon chains, while a peripheral stalk is formed by the delta and b chains.

The protein localises to the cell inner membrane. It catalyses the reaction ATP + H2O + 4 H(+)(in) = ADP + phosphate + 5 H(+)(out). In terms of biological role, produces ATP from ADP in the presence of a proton gradient across the membrane. The alpha chain is a regulatory subunit. The sequence is that of ATP synthase subunit alpha from Haemophilus influenzae (strain ATCC 51907 / DSM 11121 / KW20 / Rd).